A 478-amino-acid chain; its full sequence is Probable sodium/glutamine symporter GlnT (478 aa).

10 consecutive transmembrane segments (helical) span residues 14–34, 85–105, 145–165, 185–205, 211–231, 236–256, 298–318, 342–362, 381–401, and 411–431; these read DLLW…YFTF, IAIA…IIAI, WMGA…FNSV, LGLI…KRIA, IVVV…FSNI, GVLA…GGAL, AFGV…IILF, GSWA…CALI, LIFV…VAKV, and FMGL…KVVF.

The protein belongs to the alanine or glycine:cation symporter (AGCS) (TC 2.A.25) family.

The protein resides in the cell membrane. In terms of biological role, probably functions as a sodium/glutamine symporter for glutamine uptake. The protein is Probable sodium/glutamine symporter GlnT (glnT) of Bacillus subtilis (strain 168).